A 1003-amino-acid chain; its full sequence is Methyl-CpG-binding domain protein 6 (1003 aa).

The MBD domain occupies 13–83; the sequence is AGGPAATPVP…KVFNFDPLAP (71 aa). Residues 59–70 are required for interaction with ASXL1/2/3; that stretch reads DGTCKCGLECPL. Disordered stretches follow at residues 123–222, 241–302, 334–619, 631–659, 684–736, and 753–1003; these read CSHS…PPPA, VPSD…ATMH, AKAQ…SAPP, ALGPTAGDGEGSAEGAGGPNGEPFSGLGD, ASLD…PQLL, and SSPG…KLAP. Pro residues-rich tracts occupy residues 142-157 and 168-196; these read PGPPSVRPPCRAPPTT and QDPPSVPQAFPPLTGPAGLFPPPRLPDPV. Residues 252–262 show a composition bias toward low complexity; sequence HASSSPPSDSP. Residues 273–293 are compositionally biased toward pro residues; that stretch reads PPLPPSNNPPGPPGPPGPATQ. Residues 351–363 are compositionally biased toward low complexity; that stretch reads AQAPSAAHASPRP. The segment covering 393 to 409 has biased composition (pro residues); the sequence is APAPVPQPFPLPEPSQP. The span at 410–428 shows a compositional bias: low complexity; that stretch reads ILPSVLSLLGLPTPGPSHS. Residues 441–458 show a composition bias toward pro residues; it reads LPPPPALSSGSPPQPRHP. Composition is skewed to low complexity over residues 462-500 and 533-550; these read SLPGTTSGSLSSVPGAPAPPAASKAPVVPSPVLQSPSDG and GAGFPGMLGALPLPLSLG. The segment covering 571 to 590 has biased composition (pro residues); that stretch reads QPPPEPLLPPPGGPGPPSAP. The segment covering 591–604 has biased composition (low complexity); sequence GEPEGPSLLVASLL. A compositionally biased stretch (pro residues) spans 605–618; that stretch reads SPPPSDLLPPPSAP. The span at 636–650 shows a compositional bias: gly residues; sequence AGDGEGSAEGAGGPN. The span at 708 to 719 shows a compositional bias: polar residues; that stretch reads TSSVTTATTDPG. Residues 768–798 show a composition bias toward low complexity; sequence LLSSQLGLQLLPGGGAPPALSEASSPLACLL. The segment covering 805-817 has biased composition (pro residues); that stretch reads PEQPDAPCLPPES. The segment covering 818-837 has biased composition (low complexity); the sequence is PASALEPEPARPPLSALAPP. Over residues 947–958 the composition is skewed to basic residues; the sequence is RKSRRGRRRKYN. Positions 960-969 are enriched in polar residues; sequence ARNSSSSRQD. Residues 989 to 1003 are compositionally biased toward basic residues; that stretch reads RPGRPAKNKRRKLAP.

As to quaternary structure, core component of the polycomb repressive deubiquitinase (PR-DUB) complex, at least composed of BAP1, one of ASXL1, ASXL2 or (probably) ASXL3, and one of MBD5 or MBD6. Distinct combinations of ASXL and MBD proteins may preferentially bind specific histone modification marks. The PR-DUB core associates with a number of accessory proteins, including FOXK1, FOXK2, KDM1B, HCFC1 and OGT; KDM1B specifically associates with ASXL2 PR-DUB complexes. Interacts (via MBD domain) with ASXL1, ASXL2 and ASXL3 (via PHD domain); the interaction is probably direct, mediates association with other PR-DUB complex core components. In terms of tissue distribution, expressed at highest levels in adult testis.

The protein resides in the nucleus. The protein localises to the chromosome. In terms of biological role, non-catalytic component of the polycomb repressive deubiquitinase (PR-DUB) complex, a complex that specifically mediates deubiquitination of histone H2A monoubiquitinated at 'Lys-120' (H2AK119ub1). Important for stability of PR-DUB components and stimulating its ubiquitinase activity. As part of the PR-DUB complex, associates with chromatin enriched in histone marks H3K4me1, H3K4me3, and H3K27Ac, but not in H3K27me3. MBD5 and MBD6 containing complexes associate with distinct chromatin regions enriched in genes involved in different pathways. Heterochromatin recruitment is not mediated by DNA methylation. The PR-DUB complex is an epigenetic regulator of gene expression, including genes involved in development, cell communication, signaling, cell proliferation and cell viability; may promote cancer cell growth. The protein is Methyl-CpG-binding domain protein 6 (Mbd6) of Mus musculus (Mouse).